The chain runs to 384 residues: S-adenosylmethionine synthase (384 aa).

His15 serves as a coordination point for ATP. Asp17 contacts Mg(2+). K(+) is bound at residue Glu43. Residues Glu56 and Gln99 each contribute to the L-methionine site. A flexible loop region spans residues 99–109 (QSPDINQGVDR). ATP is bound by residues 164–166 (DAK), 231–232 (RF), Asp240, 246–247 (RK), Ala263, and Lys267. Asp240 serves as a coordination point for L-methionine. Lys271 contacts L-methionine.

This sequence belongs to the AdoMet synthase family. As to quaternary structure, homotetramer; dimer of dimers. The cofactor is Mg(2+). K(+) is required as a cofactor.

The protein localises to the cytoplasm. The enzyme catalyses L-methionine + ATP + H2O = S-adenosyl-L-methionine + phosphate + diphosphate. The protein operates within amino-acid biosynthesis; S-adenosyl-L-methionine biosynthesis; S-adenosyl-L-methionine from L-methionine: step 1/1. In terms of biological role, catalyzes the formation of S-adenosylmethionine (AdoMet) from methionine and ATP. The overall synthetic reaction is composed of two sequential steps, AdoMet formation and the subsequent tripolyphosphate hydrolysis which occurs prior to release of AdoMet from the enzyme. This is S-adenosylmethionine synthase from Shewanella piezotolerans (strain WP3 / JCM 13877).